We begin with the raw amino-acid sequence, 616 residues long: Tumor necrosis factor receptor superfamily member 11A (616 aa).

Positions 1-29 (MAPRARRRRPLFALLLLCALLARLQVALQ) are cleaved as a signal peptide. Residues 30-212 (IAPPCTSEKH…PPNEPHVYLP (183 aa)) lie on the Extracellular side of the membrane. 9 cysteine pairs are disulfide-bonded: Cys34–Cys46, Cys47–Cys60, Cys50–Cys68, Cys71–Cys86, Cys92–Cys112, Cys114–Cys127, Cys124–Cys126, Cys133–Cys151, and Cys154–Cys169. TNFR-Cys repeat units follow at residues 34 to 68 (CTSE…DSVC), 71 to 112 (CGPD…PRRC), 114 to 151 (CTAG…DTVC), and 154 to 194 (CLAG…DAVC). N-linked (GlcNAc...) asparagine glycosylation is present at Asn105. Cys133, Ala134, and Ser160 together coordinate Na(+). An N-linked (GlcNAc...) asparagine glycan is attached at Asn174. An intrachain disulfide couples Cys175 to Cys194. A helical membrane pass occupies residues 213–233 (GLIILLLFASVALVAAIIFGV). Residues 234 to 616 (CYRKKGKALT…PVQEQGGAKA (383 aa)) are Cytoplasmic-facing. The interval 468–536 (PLPQCAYGMG…GNSNSTFISS (69 aa)) is disordered. Over residues 483–493 (EASRTEARDQP) the composition is skewed to basic and acidic residues. Residues 499-508 (GRLPSSARAG) are compositionally biased toward low complexity. Over residues 524–536 (NVTGNSNSTFISS) the composition is skewed to polar residues. A required for interaction with EEIG1 and osteoclast differentiation region spans residues 544–549 (GDIIVV). The interval 556-616 (QEGAAAAAEP…PVQEQGGAKA (61 aa)) is disordered. A compositionally biased stretch (basic and acidic residues) spans 570–580 (VQEETLARRDS). Residue Ser580 is modified to Phosphoserine.

As to quaternary structure, binds to the clefts between the subunits of the TNFSF11 ligand trimer to form a heterohexamer. Part of a complex composed of EEIG1, TNFRSF11A/RANK, PLCG2, GAB2, TEC and BTK; complex formation increases in the presence of TNFSF11/RANKL. Interacts with TRAF1, TRAF2, TRAF3, TRAF5 and TRAF6. Interacts (via cytoplasmic domain) with GAB2. Interacts (via cytoplasmic domain); with EEIG1 (via N-terminus); when in the presence of TNFSF11/RANKL. As to expression, ubiquitous expression with high levels in skeletal muscle, thymus, liver, colon, small intestine and adrenal gland.

The protein localises to the cell membrane. The protein resides in the membrane raft. Receptor for TNFSF11/RANKL/TRANCE/OPGL; essential for RANKL-mediated osteoclastogenesis. Its interaction with EEIG1 promotes osteoclastogenesis via facilitating the transcription of NFATC1 and activation of PLCG2. Involved in the regulation of interactions between T-cells and dendritic cells. The polypeptide is Tumor necrosis factor receptor superfamily member 11A (TNFRSF11A) (Homo sapiens (Human)).